Here is a 364-residue protein sequence, read N- to C-terminus: 3-isopropylmalate dehydrogenase (364 aa).

79–92 (GPKWEHLPPDQQPE) provides a ligand contact to NAD(+). Substrate contacts are provided by arginine 100, arginine 110, arginine 139, and aspartate 228. Residues aspartate 228, aspartate 252, and aspartate 256 each coordinate Mg(2+). 286–298 (GSAPDIAGKNIAN) contributes to the NAD(+) binding site.

It belongs to the isocitrate and isopropylmalate dehydrogenases family. LeuB type 1 subfamily. Homodimer. It depends on Mg(2+) as a cofactor. The cofactor is Mn(2+).

It localises to the cytoplasm. The enzyme catalyses (2R,3S)-3-isopropylmalate + NAD(+) = 4-methyl-2-oxopentanoate + CO2 + NADH. Its pathway is amino-acid biosynthesis; L-leucine biosynthesis; L-leucine from 3-methyl-2-oxobutanoate: step 3/4. Functionally, catalyzes the oxidation of 3-carboxy-2-hydroxy-4-methylpentanoate (3-isopropylmalate) to 3-carboxy-4-methyl-2-oxopentanoate. The product decarboxylates to 4-methyl-2 oxopentanoate. In Escherichia coli (strain UTI89 / UPEC), this protein is 3-isopropylmalate dehydrogenase.